A 289-amino-acid polypeptide reads, in one-letter code: Glyoxylate/succinic semialdehyde reductase 1 (289 aa).

M1 is modified (N-acetylmethionine). NADP(+) is bound by residues G4–N18 and T95. Residue K170 is part of the active site. K238 provides a ligand contact to NADP(+).

Belongs to the HIBADH-related family. NP60 subfamily.

The protein resides in the cytoplasm. It localises to the cytosol. The catalysed reaction is glycolate + NADP(+) = glyoxylate + NADPH + H(+). The enzyme catalyses 4-hydroxybutanoate + NADP(+) = succinate semialdehyde + NADPH + H(+). With respect to regulation, the ratio of NADPH/NADP(+) may regulate enzymatic activity. Its function is as follows. Catalyzes the NADPH-dependent reduction of glyoxylate to glycolate as well as succinic semialdehyde (SSA) to gamma-hydroxybutyrate in vitro. May function in redox homeostasis and play a role in oxidative stress tolerance by detoxifying glyoxylate and SSA generated in glycolate metabolism and GABA metabolism, respectively. This Arabidopsis thaliana (Mouse-ear cress) protein is Glyoxylate/succinic semialdehyde reductase 1 (GLYR1).